The primary structure comprises 274 residues: Purine nucleoside phosphorylase YlmD (274 aa).

46–47 is a binding site for inosine; that stretch reads LH. 7 residues coordinate Zn(2+): His-80, Cys-125, His-142, Cys-182, Cys-183, Cys-242, and Cys-245. Arg-262 is a binding site for inosine.

This sequence belongs to the purine nucleoside phosphorylase YfiH/LACC1 family. The cofactor is Zn(2+).

The enzyme catalyses adenosine + phosphate = alpha-D-ribose 1-phosphate + adenine. The catalysed reaction is S-methyl-5'-thioadenosine + phosphate = 5-(methylsulfanyl)-alpha-D-ribose 1-phosphate + adenine. It carries out the reaction inosine + phosphate = alpha-D-ribose 1-phosphate + hypoxanthine. It catalyses the reaction adenosine + H2O + H(+) = inosine + NH4(+). In terms of biological role, purine nucleoside enzyme that catalyzes the phosphorolysis of adenosine and inosine nucleosides, yielding D-ribose 1-phosphate and the respective free bases, adenine and hypoxanthine. Also catalyzes the phosphorolysis of S-methyl-5'-thioadenosine into adenine and S-methyl-5-thio-alpha-D-ribose 1-phosphate. Also has adenosine deaminase activity. The polypeptide is Purine nucleoside phosphorylase YlmD (Geobacillus stearothermophilus (strain DSM 13240 / CIP 106956 / 10)).